We begin with the raw amino-acid sequence, 82 residues long: Putative antitoxin RelB1 (82 aa).

In terms of biological role, antitoxin component of a type II toxin-antitoxin (TA) system. Its cognate toxin is RelE1 (Potential). This chain is Putative antitoxin RelB1 (relB1), found in Methanocaldococcus jannaschii (strain ATCC 43067 / DSM 2661 / JAL-1 / JCM 10045 / NBRC 100440) (Methanococcus jannaschii).